Here is a 1316-residue protein sequence, read N- to C-terminus: DNA-directed RNA polymerase subunit beta' (1316 aa).

Residues cysteine 60, cysteine 62, cysteine 75, and cysteine 78 each coordinate Zn(2+). Mg(2+)-binding residues include aspartate 535, aspartate 537, and aspartate 539. Residues cysteine 891, cysteine 968, cysteine 975, and cysteine 978 each coordinate Zn(2+).

This sequence belongs to the RNA polymerase beta' chain family. In terms of assembly, the RNAP catalytic core consists of 2 alpha, 1 beta, 1 beta' and 1 omega subunit. When a sigma factor is associated with the core the holoenzyme is formed, which can initiate transcription. It depends on Mg(2+) as a cofactor. The cofactor is Zn(2+).

The catalysed reaction is RNA(n) + a ribonucleoside 5'-triphosphate = RNA(n+1) + diphosphate. In terms of biological role, DNA-dependent RNA polymerase catalyzes the transcription of DNA into RNA using the four ribonucleoside triphosphates as substrates. This Mycobacterium bovis (strain BCG / Pasteur 1173P2) protein is DNA-directed RNA polymerase subunit beta'.